Here is a 601-residue protein sequence, read N- to C-terminus: DNA ligase 2 (601 aa).

Residue glutamate 263 participates in ATP binding. The active-site N6-AMP-lysine intermediate is the lysine 265. Positions 270, 285, 314, 354, 432, and 438 each coordinate ATP.

This sequence belongs to the ATP-dependent DNA ligase family. It depends on Mg(2+) as a cofactor.

The catalysed reaction is ATP + (deoxyribonucleotide)n-3'-hydroxyl + 5'-phospho-(deoxyribonucleotide)m = (deoxyribonucleotide)n+m + AMP + diphosphate.. In terms of biological role, DNA ligase that seals nicks in double-stranded DNA during DNA replication, DNA recombination and DNA repair. This Thermofilum pendens (strain DSM 2475 / Hrk 5) protein is DNA ligase 2.